We begin with the raw amino-acid sequence, 299 residues long: Ankyrin repeat domain-containing protein 54 (299 aa).

The tract at residues 1–32 is disordered; sequence MAAAAGGADDESRSGRSSSDGECAVAPEPLTG. Position 2 is an N-acetylalanine (Ala2). Residues Ser57 and Ser62 each carry the phosphoserine modification. Positions 98 to 116 match the Nuclear localization signal (NLS) motif; that stretch reads RRLGPTGKEVHALKRLRDS. 4 ANK repeats span residues 108-137, 141-170, 174-203, and 207-239; these read HALK…DPCA, KGRT…DPNQ, LGNT…RVDA, and AGRT…EVKQ. The interval 140-240 is LYN-binding; sequence DKGRTALHFA…EAVRLEVKQI (101 aa). Positions 282–292 match the Nuclear export signal (NES) motif; the sequence is LLASFTSLSLQ.

As to quaternary structure, interacts (via ankyrin repeat region) with LYN (via SH3-domain) in an activation-independent status of LYN. Forms a multiprotein complex with LYN and HCLS1. Interacts with TSN2, VAV1, DBNL and LASP1.

The protein resides in the nucleus. It localises to the cytoplasm. It is found in the midbody. Functionally, plays an important role in regulating intracellular signaling events associated with erythroid terminal differentiation. In Bos taurus (Bovine), this protein is Ankyrin repeat domain-containing protein 54 (ANKRD54).